A 149-amino-acid chain; its full sequence is MADQLTEEQIAEFKEAFSLFDKDGDGTITTKELGTVMRSLGQNPTEAELQDMINEVDADGNGTIDFPEFLTMMARKMKDTDSEEEIREAFRVFDKDGNGYISAAELRHVMTNLGEKLTDEEVDEMIREADIDGDGQVNYEEFVQIMTAK.

Ala-2 carries the post-translational modification N-acetylalanine. EF-hand domains follow at residues 8-43 (EQIA…LGQN), 44-79 (PTEA…KMKD), 81-116 (DSEE…LGEK), and 117-149 (LTDE…MTAK). Residues Asp-21, Asp-23, Asp-25, Thr-27, Glu-32, Asp-57, Asp-59, Asn-61, Thr-63, Glu-68, Asp-94, Asp-96, Asn-98, Tyr-100, and Glu-105 each contribute to the Ca(2+) site. Position 116 is an N6,N6,N6-trimethyllysine (Lys-116). Ca(2+)-binding residues include Asp-130, Asp-132, Asp-134, Gln-136, and Glu-141.

This sequence belongs to the calmodulin family.

In terms of biological role, calmodulin acts as part of a calcium signal transduction pathway by mediating the control of a large number of enzymes, ion channels, aquaporins and other proteins through calcium-binding. Calcium-binding is required for the activation of calmodulin. Among the enzymes to be stimulated by the calmodulin-calcium complex are a number of protein kinases, such as myosin light-chain kinases and calmodulin-dependent protein kinase type II (CaMK2), and phosphatases. The polypeptide is Calmodulin (calm) (Epinephelus akaara (Hong Kong grouper)).